The chain runs to 58 residues: ATP synthase F(0) complex subunit k, mitochondrial (58 aa).

Residues Lys-16 and Lys-17 each carry the N6-acetyllysine modification. A helical membrane pass occupies residues 23–45 (TLTGRMNCVLATYGGIALLVLYF).

Component of the ATP synthase complex composed at least of ATP5F1A/subunit alpha, ATP5F1B/subunit beta, ATP5MC1/subunit c (homooctomer), MT-ATP6/subunit a, MT-ATP8/subunit 8, ATP5ME/subunit e, ATP5MF/subunit f, ATP5MG/subunit g, ATP5MK/subunit k, ATP5MJ/subunit j, ATP5F1C/subunit gamma, ATP5F1D/subunit delta, ATP5F1E/subunit epsilon, ATP5PF/subunit F6, ATP5PB/subunit b, ATP5PD/subunit d, ATP5PO/subunit OSCP. ATP synthase complex consists of a soluble F(1) head domain (subunits alpha(3) and beta(3)) - the catalytic core - and a membrane F(0) domain - the membrane proton channel (subunits c, a, 8, e, f, g, k and j). These two domains are linked by a central stalk (subunits gamma, delta, and epsilon) rotating inside the F1 region and a stationary peripheral stalk (subunits F6, b, d, and OSCP). The ATP synthase complex/complex V exists as a monomeric and a dimeric supercomplex that helps shape mitochondrial cristae to optimize proton flow.

It localises to the mitochondrion membrane. Its function is as follows. Subunit k, of the mitochondrial membrane ATP synthase complex (F(1)F(0) ATP synthase or Complex V) that produces ATP from ADP in the presence of a proton gradient across the membrane which is generated by electron transport complexes of the respiratory chain. ATP synthase complex consist of a soluble F(1) head domain - the catalytic core - and a membrane F(1) domain - the membrane proton channel. These two domains are linked by a central stalk rotating inside the F(1) region and a stationary peripheral stalk. During catalysis, ATP synthesis in the catalytic domain of F(1) is coupled via a rotary mechanism of the central stalk subunits to proton translocation. In vivo, can only synthesize ATP although its ATP hydrolase activity can be activated artificially in vitro. Part of the complex F(0) domain. Required for dimerization of the ATP synthase complex and as such regulates ATP synthesis in the mitochondria. This chain is ATP synthase F(0) complex subunit k, mitochondrial, found in Mus musculus (Mouse).